Here is a 919-residue protein sequence, read N- to C-terminus: MADNAGEYHDAEKHAPEQQAPPPQQPAHAAAPAQDDEPDDDIDALIEELFSEDVQEEQEDNDDAPAAGEAKAVPEELLQTDMNTGLTMSEVEERRKKYGLNQMKEELENPFLKFIMFFVGPIQFVMEMAAALAAGLRDWVDFGVICALLMLNAVVGFVQEYQAGSIVDELKKSLALKAVVIREGQVHELEANEVVPGDILKLDEGTIICADGRVVTPDVHLQVDQSAITGESLAVDKHYGDPTFASSGVKRGEGLMVVTATGDSTFVGRAASLVNAAAGGTGHFTEVLNGIGTILLVLVLLTLFCIYTAAFYRSVRLARLLEYTLAITIIGVPVGLPAVVTTTMAVGAAYLAEKQAIVQKLSAIESLAGVEVLCSDKTGTLTKNKLSLGEPFTVSGVSGDDLVLTACLAASRKRKGLDAIDKAFLKALKNYPGPRSMLTKYKVIEFQPFDPVSKKVTAYVQAPDGTRITCVKGAPLWVLKTVEEDHPIPEDVLSAYKDKVGDLASRGYRSLGVARKIEGQHWEIMGIMPCSDPPRHDTARTISEAKRLGLRVKMLTGDAVDIAKETARQLGMGTNIYNAERLGLTGGGNMPGSEVYDFVEAADGFGEVFPQHKYAVVDILQQRGYLVAMTGDGVNDAPSLKKADTGIAVEGATDAARSAADIVFLAPGLSAIIDALKTSRQIFHRMYSYVVYRIALSLHLEIFLGLWLIIRNQLLNLELVVFIAIFADVATLAIAYDNAPYSMKPVKWNLPRLWGLSTVIGIVLAIGTWITNTTMIAQGQNRGIVQNFGVQDEVLFLEISLTENWLIFVTRCNGPFWSSIPSWQLSGAVLAVDILATMFCIFGWFKGGHQTSIVAVLRIWMYSFGIFCIMAGTYYILSESAGFDRMMNGKPKESRNQRSIEDLVVALQRTSTRHEKGDA.

Over residues 1–16 (MADNAGEYHDAEKHAP) the composition is skewed to basic and acidic residues. The tract at residues 1-73 (MADNAGEYHD…APAAGEAKAV (73 aa)) is disordered. The Cytoplasmic segment spans residues 1–113 (MADNAGEYHD…KEELENPFLK (113 aa)). Residues 34-63 (QDDEPDDDIDALIEELFSEDVQEEQEDNDD) are compositionally biased toward acidic residues. Ser89 carries the phosphoserine modification. The chain crosses the membrane as a helical span at residues 114-134 (FIMFFVGPIQFVMEMAAALAA). Over 135–138 (GLRD) the chain is Extracellular. A helical membrane pass occupies residues 139–158 (WVDFGVICALLMLNAVVGFV). The Cytoplasmic segment spans residues 159 to 289 (QEYQAGSIVD…GTGHFTEVLN (131 aa)). The chain crosses the membrane as a helical span at residues 290–311 (GIGTILLVLVLLTLFCIYTAAF). The Extracellular portion of the chain corresponds to 312–322 (YRSVRLARLLE). Residues 323 to 345 (YTLAITIIGVPVGLPAVVTTTMA) traverse the membrane as a helical segment. The Cytoplasmic segment spans residues 346–717 (VGAAYLAEKQ…LIIRNQLLNL (372 aa)). Asp376 functions as the 4-aspartylphosphate intermediate in the catalytic mechanism. Ser494 is subject to Phosphoserine. The Mg(2+) site is built by Asp632 and Asp636. The chain crosses the membrane as a helical span at residues 718 to 736 (ELVVFIAIFADVATLAIAY). Residues 737–752 (DNAPYSMKPVKWNLPR) are Extracellular-facing. Residues 753 to 772 (LWGLSTVIGIVLAIGTWITN) traverse the membrane as a helical segment. The Cytoplasmic segment spans residues 773–824 (TTMIAQGQNRGIVQNFGVQDEVLFLEISLTENWLIFVTRCNGPFWSSIPSWQ). The chain crosses the membrane as a helical span at residues 825–845 (LSGAVLAVDILATMFCIFGWF). The Extracellular portion of the chain corresponds to 846-858 (KGGHQTSIVAVLR). Residues 859–875 (IWMYSFGIFCIMAGTYY) form a helical membrane-spanning segment. Over 876–919 (ILSESAGFDRMMNGKPKESRNQRSIEDLVVALQRTSTRHEKGDA) the chain is Cytoplasmic. A Phosphoserine modification is found at Ser899.

It belongs to the cation transport ATPase (P-type) (TC 3.A.3) family. Type IIIA subfamily.

It is found in the cell membrane. The enzyme catalyses ATP + H2O + H(+)(in) = ADP + phosphate + 2 H(+)(out). Its function is as follows. The plasma membrane ATPase of plants and fungi is a hydrogen ion pump. The proton gradient it generates drives the active transport of nutrients by H(+)-symport. The resulting external acidification and/or internal alkinization may mediate growth responses. This is Plasma membrane ATPase 1 (pma1) from Schizosaccharomyces pombe (strain 972 / ATCC 24843) (Fission yeast).